We begin with the raw amino-acid sequence, 1182 residues long: Rho guanine nucleotide exchange factor osg-1 (1182 aa).

The span at 1 to 12 (MLNPNDADDSDS) shows a compositional bias: acidic residues. Residues 1–96 (MLNPNDADDS…TNSEPNVDMP (96 aa)) are disordered. Polar residues predominate over residues 29–41 (ATVSPSTRNSFYN). Basic and acidic residues predominate over residues 69 to 78 (ASRERSESRR). The DH domain maps to 357–544 (VRHLAARELL…HCLAVAINQH (188 aa)). Positions 637 to 669 (EDVQISKDTLSQLEEVERKLESSREDDRVLKKM) form a coiled coil. The tract at residues 863–884 (INSSGSDTESSSDEGTSTAGQT) is disordered. Positions 865 to 879 (SSGSDTESSSDEGTS) are enriched in low complexity. Positions 897–922 (VVNSTERVRSRARDRLARLRNSITSI) form a coiled coil.

As to expression, expressed in muscles in the body wall and head, and in the nervous system in neurons including FLP and ASE neurons in the head.

Its function is as follows. Probable guanine nucleotide exchange factor which regulates the Rho GTPase rho-1. Functions in ASE sensory neurons where it promotes neuronal degeneration under conditions of oxidative stress. The polypeptide is Rho guanine nucleotide exchange factor osg-1 (Caenorhabditis elegans).